Consider the following 494-residue polypeptide: Aldehyde dehydrogenase family 7 member A1 (494 aa).

247–252 serves as a coordination point for NAD(+); the sequence is GSSKVG. The active-site Proton acceptor is Glu-269. The active-site Nucleophile is Cys-303.

Belongs to the aldehyde dehydrogenase family. As to quaternary structure, homotetramer.

The catalysed reaction is an aldehyde + NAD(+) + H2O = a carboxylate + NADH + 2 H(+). The chain is Aldehyde dehydrogenase family 7 member A1 (BTG-26) from Brassica napus (Rape).